Here is a 246-residue protein sequence, read N- to C-terminus: UDP-N-acetyl-D-mannosaminuronic acid transferase (246 aa).

This sequence belongs to the glycosyltransferase 26 family.

The catalysed reaction is UDP-N-acetyl-alpha-D-mannosaminouronate + N-acetyl-alpha-D-glucosaminyl-di-trans,octa-cis-undecaprenyl diphosphate = beta-D-ManNAcA-(1-&gt;4)-alpha-D-GlcNAc-di-trans,octa-cis-undecaprenyl diphosphate + UDP + H(+). The protein operates within bacterial outer membrane biogenesis; enterobacterial common antigen biosynthesis. Functionally, catalyzes the synthesis of Und-PP-GlcNAc-ManNAcA (Lipid II), the second lipid-linked intermediate involved in enterobacterial common antigen (ECA) synthesis. The polypeptide is UDP-N-acetyl-D-mannosaminuronic acid transferase (Yersinia pestis bv. Antiqua (strain Antiqua)).